We begin with the raw amino-acid sequence, 232 residues long: Flagellar L-ring protein (232 aa).

Positions 1–21 (MQKNAAHTYAISSLLVLSLTG) are cleaved as a signal peptide. Cys-22 carries the N-palmitoyl cysteine lipid modification. Cys-22 carries S-diacylglycerol cysteine lipidation.

Belongs to the FlgH family. In terms of assembly, the basal body constitutes a major portion of the flagellar organelle and consists of four rings (L,P,S, and M) mounted on a central rod.

The protein localises to the cell outer membrane. Its subcellular location is the bacterial flagellum basal body. Its function is as follows. Assembles around the rod to form the L-ring and probably protects the motor/basal body from shearing forces during rotation. In Shigella dysenteriae serotype 1 (strain Sd197), this protein is Flagellar L-ring protein.